Reading from the N-terminus, the 246-residue chain is DNA repair protein RecO (246 aa).

This sequence belongs to the RecO family.

Functionally, involved in DNA repair and RecF pathway recombination. This is DNA repair protein RecO from Methylobacterium nodulans (strain LMG 21967 / CNCM I-2342 / ORS 2060).